The chain runs to 278 residues: Potassium/proton antiporter CemA (278 aa).

4 helical membrane-spanning segments follow: residues 60–80, 155–175, 201–221, and 239–259; these read YLLL…SFVF, AMKN…LIVT, FLII…GWEV, and IFLF…YWIF.

Belongs to the CemA family.

Its subcellular location is the plastid. It is found in the chloroplast inner membrane. The enzyme catalyses K(+)(in) + H(+)(out) = K(+)(out) + H(+)(in). Functionally, contributes to K(+)/H(+) antiport activity by supporting proton efflux to control proton extrusion and homeostasis in chloroplasts in a light-dependent manner to modulate photosynthesis. Prevents excessive induction of non-photochemical quenching (NPQ) under continuous-light conditions. Indirectly promotes efficient inorganic carbon uptake into chloroplasts. The protein is Potassium/proton antiporter CemA of Rhodomonas salina (Cryptomonas salina).